The following is a 492-amino-acid chain: Probable serine/threonine-protein kinase WNK9 (492 aa).

The Protein kinase domain occupies 25-282 (GRYNEVLGKG…ACELLDDHFL (258 aa)). ATP is bound by residues 105 to 108 (TEMF) and K155. D172 (proton acceptor) is an active-site residue.

It belongs to the protein kinase superfamily. Ser/Thr protein kinase family. WNK subfamily.

The enzyme catalyses L-seryl-[protein] + ATP = O-phospho-L-seryl-[protein] + ADP + H(+). It catalyses the reaction L-threonyl-[protein] + ATP = O-phospho-L-threonyl-[protein] + ADP + H(+). May regulate flowering time by modulating the photoperiod pathway. The chain is Probable serine/threonine-protein kinase WNK9 (WNK9) from Arabidopsis thaliana (Mouse-ear cress).